Consider the following 245-residue polypeptide: Octanoyltransferase (245 aa).

One can recognise a BPL/LPL catalytic domain in the interval 54–238 (GEATELVWLL…AFENIFGETR (185 aa)). Substrate-binding positions include 92–99 (RGGQLTYH), 167–169 (AIG), and 180–182 (GIA). The Acyl-thioester intermediate role is filled by C198.

It belongs to the LipB family.

Its subcellular location is the cytoplasm. The enzyme catalyses octanoyl-[ACP] + L-lysyl-[protein] = N(6)-octanoyl-L-lysyl-[protein] + holo-[ACP] + H(+). It participates in protein modification; protein lipoylation via endogenous pathway; protein N(6)-(lipoyl)lysine from octanoyl-[acyl-carrier-protein]: step 1/2. In terms of biological role, catalyzes the transfer of endogenously produced octanoic acid from octanoyl-acyl-carrier-protein onto the lipoyl domains of lipoate-dependent enzymes. Lipoyl-ACP can also act as a substrate although octanoyl-ACP is likely to be the physiological substrate. This Rhodopseudomonas palustris (strain TIE-1) protein is Octanoyltransferase.